The sequence spans 205 residues: Casparian strip membrane protein 4 (205 aa).

The Cytoplasmic segment spans residues 1–58 (MDIEKTGSRREEEEPIVQKPKLEKGKGKAHVFAPPMNYSRIMEKHKQEKVSMAGWKRG). Residues 59–79 (VAIFDFVLRLIAAITAMAAAA) form a helical membrane-spanning segment. Over 80–109 (KMATTEETLPFFTQFLQFSADYTDLPTLSS) the chain is Extracellular. The helical transmembrane segment at 110-130 (FVIVNSIVGGYLTLSLPFSIV) threads the bilayer. The Cytoplasmic segment spans residues 131 to 148 (CILRPLAVPPRLFLILCD). Residues 149-169 (TAMMGLTMVAASASAAIVYLA) form a helical membrane-spanning segment. The Extracellular portion of the chain corresponds to 170–205 (HNGNSSSNWLPVCQQFGDFCKERVAPWWLPLLQRLF). The N-linked (GlcNAc...) asparagine glycan is linked to Asn173.

Belongs to the Casparian strip membrane proteins (CASP) family. In terms of assembly, homodimer and heterodimers.

The protein localises to the cell membrane. In terms of biological role, regulates membrane-cell wall junctions and localized cell wall deposition. Required for establishment of the Casparian strip membrane domain (CSD) and the subsequent formation of Casparian strips, a cell wall modification of the root endodermis that determines an apoplastic barrier between the intraorganismal apoplasm and the extraorganismal apoplasm and prevents lateral diffusion. The sequence is that of Casparian strip membrane protein 4 from Raphanus sativus (Radish).